Consider the following 214-residue polypeptide: Large ribosomal subunit protein uL3 (214 aa).

Polar residues predominate over residues 132 to 145 (SNRASHGNSVTTRA). Residues 132–155 (SNRASHGNSVTTRAPGSIGQAQDP) are disordered. Glutamine 153 is modified (N5-methylglutamine).

The protein belongs to the universal ribosomal protein uL3 family. In terms of assembly, part of the 50S ribosomal subunit. Forms a cluster with proteins L14 and L19. In terms of processing, methylated by PrmB.

Its function is as follows. One of the primary rRNA binding proteins, it binds directly near the 3'-end of the 23S rRNA, where it nucleates assembly of the 50S subunit. The sequence is that of Large ribosomal subunit protein uL3 from Laribacter hongkongensis (strain HLHK9).